Reading from the N-terminus, the 122-residue chain is Small ribosomal subunit protein uS13 (122 aa).

The segment covering 95–116 has biased composition (basic residues); that stretch reads GLPCRGQKTKTNARTRKGKKKT. The disordered stretch occupies residues 95-122; it reads GLPCRGQKTKTNARTRKGKKKTVGAATK.

It belongs to the universal ribosomal protein uS13 family. Part of the 30S ribosomal subunit. Forms a loose heterodimer with protein S19. Forms two bridges to the 50S subunit in the 70S ribosome.

Its function is as follows. Located at the top of the head of the 30S subunit, it contacts several helices of the 16S rRNA. In the 70S ribosome it contacts the 23S rRNA (bridge B1a) and protein L5 of the 50S subunit (bridge B1b), connecting the 2 subunits; these bridges are implicated in subunit movement. Contacts the tRNAs in the A and P-sites. This is Small ribosomal subunit protein uS13 from Aliarcobacter butzleri (strain RM4018) (Arcobacter butzleri).